A 1211-amino-acid chain; its full sequence is Sterol 3-beta-glucosyltransferase (1211 aa).

Residues 1–10 show a composition bias toward basic and acidic residues; sequence MSQLRPRDSS. The tract at residues 1-61 is disordered; sequence MSQLRPRDSS…DETEAEDDID (61 aa). The 40-residue stretch at 196–235 folds into the GRAM 1 domain; it reads EKLKTTFDLSDDDEFVNDYPCWLLHEVFLQGHIYITSRYL. In terms of domain architecture, PH spans 248 to 347; the sequence is VTMSGALSIR…WVTDLRKHIF (100 aa). Disordered regions lie at residues 422-452 and 500-531; these read LTDSDSSESDSDVSGSETNGRSTHRKSKLSR and VVPNDNDSELKQDHAGDAPKDSEEPSTKPSNW. The span at 423 to 432 shows a compositional bias: acidic residues; the sequence is TDSDSSESDS. The span at 507–525 shows a compositional bias: basic and acidic residues; it reads SELKQDHAGDAPKDSEEPS. The GRAM 2 domain maps to 586-652; the sequence is SRFRKHFSLP…SDIENVYNLK (67 aa). Residues Ser770, Arg771, Asp773, Asn1046, Asn1072, Val1073, His1075, His1088, Ser1091, Gly1092, Thr1093, Asp1112, and Gln1113 each contribute to the UDP-alpha-D-glucose site.

This sequence belongs to the glycosyltransferase 28 family.

Its subcellular location is the cytoplasm. The protein resides in the preautophagosomal structure membrane. It catalyses the reaction a sterol + UDP-alpha-D-glucose = a sterol 3-beta-D-glucoside + UDP + H(+). It carries out the reaction ergosterol + UDP-alpha-D-glucose = ergosteryl 3-beta-D-glucoside + UDP + H(+). Functionally, sterol glycosyltransferase responsible for the glycosylation of ergosterol to form ergosterol-glucoside. Shows also activity in vitro on other sterols such as cholesterol, beta-sitosterol, stigmasterol and tomatidine. Probable sterol 3-beta-glucosyltransferase that mediates autophagic degradation of peroxisomes (pexophagy). This Komagataella phaffii (strain GS115 / ATCC 20864) (Yeast) protein is Sterol 3-beta-glucosyltransferase.